The primary structure comprises 502 residues: Probable cytosol aminopeptidase 2 (502 aa).

Positions 269 and 274 each coordinate Mn(2+). K281 is a catalytic residue. 3 residues coordinate Mn(2+): D292, D351, and E353. R355 is a catalytic residue.

Belongs to the peptidase M17 family. The cofactor is Mn(2+).

It is found in the cytoplasm. The enzyme catalyses Release of an N-terminal amino acid, Xaa-|-Yaa-, in which Xaa is preferably Leu, but may be other amino acids including Pro although not Arg or Lys, and Yaa may be Pro. Amino acid amides and methyl esters are also readily hydrolyzed, but rates on arylamides are exceedingly low.. The catalysed reaction is Release of an N-terminal amino acid, preferentially leucine, but not glutamic or aspartic acids.. In terms of biological role, presumably involved in the processing and regular turnover of intracellular proteins. Catalyzes the removal of unsubstituted N-terminal amino acids from various peptides. This is Probable cytosol aminopeptidase 2 (pepA2) from Shewanella oneidensis (strain ATCC 700550 / JCM 31522 / CIP 106686 / LMG 19005 / NCIMB 14063 / MR-1).